Here is a 264-residue protein sequence, read N- to C-terminus: ATP synthase subunit a (264 aa).

Helical transmembrane passes span 29-49 (TWHIDSLFFSVGLGVLFLWIF), 90-110 (IAPLALTIFMWVFMMNFMDMI), 134-154 (DVNITFSLAIGVFVLIIYYSI), 177-197 (IPVNLLLETVTLIAKPISLAL), 208-228 (LIFILIALMYGTNLLLSSLGV), and 235-255 (LIFHILVITLQAFIFMMLTIV).

The protein belongs to the ATPase A chain family. In terms of assembly, F-type ATPases have 2 components, CF(1) - the catalytic core - and CF(0) - the membrane proton channel. CF(1) has five subunits: alpha(3), beta(3), gamma(1), delta(1), epsilon(1). CF(0) has three main subunits: a(1), b(2) and c(9-12). The alpha and beta chains form an alternating ring which encloses part of the gamma chain. CF(1) is attached to CF(0) by a central stalk formed by the gamma and epsilon chains, while a peripheral stalk is formed by the delta and b chains.

It localises to the cell inner membrane. Functionally, key component of the proton channel; it plays a direct role in the translocation of protons across the membrane. The chain is ATP synthase subunit a from Shewanella oneidensis (strain ATCC 700550 / JCM 31522 / CIP 106686 / LMG 19005 / NCIMB 14063 / MR-1).